We begin with the raw amino-acid sequence, 85 residues long: Beta-insect depressant toxin Lqh-dprIT3c (85 aa).

The signal sequence occupies residues 1–21 (MKLLLLLTISASMLIEGLVNA). In terms of domain architecture, LCN-type CS-alpha/beta spans 22 to 82 (DGYIRGGDGC…EWDYETNTCG (61 aa)). Disulfide bonds link cysteine 31–cysteine 81, cysteine 35–cysteine 56, cysteine 42–cysteine 63, and cysteine 46–cysteine 65. At glycine 82 the chain carries Glycine amide.

Belongs to the long (4 C-C) scorpion toxin superfamily. Sodium channel inhibitor family. Beta subfamily. In terms of tissue distribution, expressed by the venom gland.

The protein localises to the secreted. Its function is as follows. Depressant insect beta-toxins cause a transient contraction paralysis followed by a slow flaccid paralysis. They bind voltage-independently at site-4 of sodium channels (Nav) and block action potentials, primarily by depolarizing the axonal membrane and suppressing the sodium current. This depressant toxin is active only on insects. It is found in a relatively small amount in the venom, and its activity on insects is 10-fold higher compared to other known depressant toxins. In Leiurus hebraeus (Hebrew deathstalker scorpion), this protein is Beta-insect depressant toxin Lqh-dprIT3c.